Reading from the N-terminus, the 627-residue chain is Plasmepsin IX (627 aa).

Residues Met-1 to Gln-13 lie on the Cytoplasmic side of the membrane. The helical; Signal-anchor for type II membrane protein transmembrane segment at Phe-14–Ile-34 threads the bilayer. Residues Asn-35–Leu-627 lie on the Lumenal side of the membrane. The Peptidase A1 domain occupies Tyr-228–Ala-605. Active-site residues include Asp-246 and Asp-495.

It belongs to the peptidase A1 family. In terms of processing, autocleaved into a p55 mature form.

Its subcellular location is the membrane. The protein resides in the cytoplasmic vesicle. The protein localises to the secretory vesicle. It localises to the rhoptry. Its activity is regulated as follows. Inhibited by small molecule 49c. Inhibited by small molecule WM382. Its function is as follows. During the asexual blood stage, initiates the proteolytic maturation of several rhoptry proteins and thus, is required for merozoite invasion of host erythrocytes and probably the subsequent development of the ring-stage. Cleaves rhoptry associated protein 1 RAP1 and apical sushi protein ASP during schizont maturation. Also cleaves rhoptry protein RON3. This Plasmodium falciparum (isolate 3D7) protein is Plasmepsin IX.